The sequence spans 88 residues: Small ribosomal subunit protein bS20 (88 aa).

Residues 1–27 (MANSKSAKKRALQSEKRRQHNASRRSM) form a disordered region.

It belongs to the bacterial ribosomal protein bS20 family.

Its function is as follows. Binds directly to 16S ribosomal RNA. The polypeptide is Small ribosomal subunit protein bS20 (Shewanella frigidimarina (strain NCIMB 400)).